The following is a 412-amino-acid chain: MRLTVFLSLFLGVMVFGAFDQEAFLFVQHLTSENFESALNMCSNQVKAQLSVQSLSNIWNSLKAQLSDFREIAGYEKIIQAEYEIYNFTLKFDRGEISALVTMDREGKVAGLFFKQATKTEYELPDYVDPESFEEKDITVNGLPGKITIPKGSGPFPAVVLVHGSGPNDMDETIGPNKIFKDIAYGLSSKGIIVLRYHKRTFVEKVDPTTLTVEKEVIEDALEAVKILKERKDVSRVYVLGHSLGAMLTPEIAERSKADGVVMIAPPARPLEEVMEDQLKYLQSLGLASNVEETLNILEKLKRKEIPPDEFVLGAPAKYFYDLRERDPASIAKRLTIPMLLIFGGRDYQVTEKDQEIWLKELSGRENVKILVFDDLNHLMISGEGKSTPVEYMKKGHVDKRVIDEIARWMVK.

The signal sequence occupies residues 1–20; that stretch reads MRLTVFLSLFLGVMVFGAFD. Ser-243 (nucleophile) is an active-site residue. Active-site charge relay system residues include Asp-347 and His-378.

This sequence belongs to the AB hydrolase superfamily. Esterase 10 family. Exists mainly as a monomer and, to some extent as a dimer.

It carries out the reaction a carboxylic ester + H2O = an alcohol + a carboxylate + H(+). Its activity is regulated as follows. Is strongly inhibited by phenylmethylsulfonyl fluoride, a serine protease inhibitor, and by mercury chloride. Diethyl pyrocarbonate, a histidine modifier, also inhibits the reaction, albeit less pronounced than phenylmethylsulfonyl fluoride. EDTA and dithiothreitol have no effect on enzyme activity. Its function is as follows. Exhibits significant esterase activity with a preference for short acyl chain esters (C4-C8) in vitro. Its physiological function is not known. Displays neither proteolytic activity using casein as substrate, nor peptidase activity when assayed with L-leucine p-nitroanilide and L-proline p-nitroanilide. The chain is Esterase EstD from Thermotoga maritima (strain ATCC 43589 / DSM 3109 / JCM 10099 / NBRC 100826 / MSB8).